A 416-amino-acid chain; its full sequence is Ferrochelatase, mitochondrial (416 aa).

A mitochondrion-targeting transit peptide spans 1 to 47 (MAAALRSAGVLLRDRLLYGGSRACQPRRCQSGAATAAAATETAQRAR). The tract at residues 41–62 (ETAQRARSPKPQAQPGNRKPRT) is disordered. The residue at position 50 (K50) is an N6-acetyllysine. Residues R108, Y116, and S123 each contribute to the protoporphyrin IX site. K131 is modified (N6-succinyllysine). Residue C189 coordinates [2Fe-2S] cluster. H223 is an active-site residue. The residue at position 283 (K283) is an N6-acetyllysine; alternate. At K283 the chain carries N6-succinyllysine; alternate. Residue D376 is part of the active site. Positions 396, 399, and 404 each coordinate [2Fe-2S] cluster. An N6-acetyllysine; alternate modification is found at K408. K408 bears the N6-succinyllysine; alternate mark.

This sequence belongs to the ferrochelatase family. In terms of assembly, homodimer. Homotetramer. Interaction with PGRMC1; the interaction results in decreased FECH activity. Interacts with ABCB10 and SLC25A37; this interaction forms an oligomeric complex. Forms a complex with ABCB7 and ABCB10, where a dimeric FECH bridges ABCB7 and ABCB10 homodimers; this complex may be required for cellular iron homeostasis, mitochondrial function and heme biosynthesis. Interacts with ABCB7 and ABCB10. [2Fe-2S] cluster is required as a cofactor.

Its subcellular location is the mitochondrion inner membrane. The catalysed reaction is heme b + 2 H(+) = protoporphyrin IX + Fe(2+). Its pathway is porphyrin-containing compound metabolism; protoheme biosynthesis; protoheme from protoporphyrin-IX: step 1/1. Functionally, catalyzes the ferrous insertion into protoporphyrin IX and participates in the terminal step in the heme biosynthetic pathway. This is Ferrochelatase, mitochondrial from Bos taurus (Bovine).